We begin with the raw amino-acid sequence, 180 residues long: Nucleoside-triphosphatase THEP1 (180 aa).

ATP is bound by residues 18 to 25 (GRPGVGKT) and 104 to 111 (LVIMDEIG).

The protein belongs to the THEP1 NTPase family.

It catalyses the reaction a ribonucleoside 5'-triphosphate + H2O = a ribonucleoside 5'-diphosphate + phosphate + H(+). In terms of biological role, has nucleotide phosphatase activity towards ATP, GTP, CTP, TTP and UTP. May hydrolyze nucleoside diphosphates with lower efficiency. This Metallosphaera sedula (strain ATCC 51363 / DSM 5348 / JCM 9185 / NBRC 15509 / TH2) protein is Nucleoside-triphosphatase THEP1.